We begin with the raw amino-acid sequence, 451 residues long: Phosphoglucosamine mutase (451 aa).

Ser-101 serves as the catalytic Phosphoserine intermediate. Positions 101, 240, 242, and 244 each coordinate Mg(2+). A Phosphoserine modification is found at Ser-101.

The protein belongs to the phosphohexose mutase family. The cofactor is Mg(2+). Activated by phosphorylation.

The catalysed reaction is alpha-D-glucosamine 1-phosphate = D-glucosamine 6-phosphate. Functionally, catalyzes the conversion of glucosamine-6-phosphate to glucosamine-1-phosphate. This chain is Phosphoglucosamine mutase, found in Streptococcus pyogenes serotype M1.